The chain runs to 219 residues: Flagellar L-ring protein (219 aa).

The signal sequence occupies residues 1–14; sequence MKRLVLISLVLAAG. Residue C15 is the site of N-palmitoyl cysteine attachment. C15 carries S-diacylglycerol cysteine lipidation.

This sequence belongs to the FlgH family. In terms of assembly, the basal body constitutes a major portion of the flagellar organelle and consists of four rings (L,P,S, and M) mounted on a central rod.

The protein resides in the cell outer membrane. It is found in the bacterial flagellum basal body. Its function is as follows. Assembles around the rod to form the L-ring and probably protects the motor/basal body from shearing forces during rotation. This chain is Flagellar L-ring protein, found in Dechloromonas aromatica (strain RCB).